Here is a 202-residue protein sequence, read N- to C-terminus: ATP-dependent Clp protease proteolytic subunit (202 aa).

Ser101 serves as the catalytic Nucleophile. His126 is an active-site residue.

It belongs to the peptidase S14 family. In terms of assembly, component of the chloroplastic Clp protease core complex.

The protein resides in the plastid. The protein localises to the chloroplast stroma. The enzyme catalyses Hydrolysis of proteins to small peptides in the presence of ATP and magnesium. alpha-casein is the usual test substrate. In the absence of ATP, only oligopeptides shorter than five residues are hydrolyzed (such as succinyl-Leu-Tyr-|-NHMec, and Leu-Tyr-Leu-|-Tyr-Trp, in which cleavage of the -Tyr-|-Leu- and -Tyr-|-Trp bonds also occurs).. In terms of biological role, cleaves peptides in various proteins in a process that requires ATP hydrolysis. Has a chymotrypsin-like activity. Plays a major role in the degradation of misfolded proteins. The polypeptide is ATP-dependent Clp protease proteolytic subunit (Nuphar advena (Common spatterdock)).